Consider the following 799-residue polypeptide: DISARM protein DrmE (799 aa).

Its subcellular location is the cytoplasm. Component of antiviral defense system DISARM (defense island system associated with restriction-modification), composed of DrmE, DrmA, DrmB, DrmC and DrmMII. DISARM is probably a multi-gene restriction module, this subunit has an unknown function. Expression of DISARM in B.subtilis (strain BEST7003) confers resistance to phages Nf, phi29, phi105, phi3T, SPO1, SPR and SPP1. Protection is over 10(7)-fold against phi3T, 10(4)-10(5)-fold against Nf, phi29, phi105 and SPR, 100-fold against SPO1 and 10-fold against SPP1. DISARM does not interfere with phage adsorption, but instead interferes with (phi3T) DNA replication early in its cycle, preventing replication, circularization and lysogeny and probably causes phage DNA degradation (DNA is degraded in SPP1-infected cells). The protein is DISARM protein DrmE of Bacillus paralicheniformis (strain ATCC 9945a / NCIMB 11709 / CD-2).